Reading from the N-terminus, the 333-residue chain is Alpha-N-acetylgalactosaminide alpha-2,6-sialyltransferase 6 (333 aa).

Residues 1–12 (MACSRPPSQCEP) are compositionally biased toward polar residues. The tract at residues 1–26 (MACSRPPSQCEPTSLPPGPPAGRRHL) is disordered. The Cytoplasmic portion of the chain corresponds to 1–43 (MACSRPPSQCEPTSLPPGPPAGRRHLPLSRRRREMSSNKEQRS). Residues 44-64 (AVFVILFALITILILYSSNSA) traverse the membrane as a helical; Signal-anchor for type II membrane protein segment. Residues 65-333 (NEVFHYGSLR…GITFSHPSWT (269 aa)) are Lumenal-facing. N-linked (GlcNAc...) asparagine glycosylation is present at N98. C108 and C256 are joined by a disulfide.

The protein belongs to the glycosyltransferase 29 family. Expressed in kidney, in proximal tubule epithelial cells. Expressed in colon cell lines.

The protein resides in the golgi apparatus membrane. The catalysed reaction is a ganglioside GM1b (d18:1(4E)) + CMP-N-acetyl-beta-neuraminate = a ganglioside GD1alpha (d18:1(4E)) + CMP + H(+). It catalyses the reaction N-acetyl-alpha-neuraminosyl-(2-&gt;3)-beta-D-galactosyl-(1-&gt;3)-N-acetyl-beta-D-glucosaminyl-(1-&gt;3)-beta-D-galactosyl-(1-&gt;4)-beta-D-glucosyl-(1&lt;-&gt;1')-N-acyl-sphing-4-enine + CMP-N-acetyl-beta-neuraminate = N-acetyl-alpha-neuraminosyl-(2-&gt;3)-beta-D-galactosyl-(1-&gt;3)-[N-acetyl-alpha-neuraminosyl-(2-&gt;6)]-N-acetyl-beta-D-glucosaminyl-(1-&gt;3)-beta-D-galactosyl-(1-&gt;4)-beta-D-glucosyl-(1&lt;-&gt;1')-N-acyl-sphing-4-enine + CMP + H(+). The enzyme catalyses a globoside MSGG + CMP-N-acetyl-beta-neuraminate = a globoside DSGG + CMP + H(+). It carries out the reaction a ganglioside GD1a (d18:1(4E)) + CMP-N-acetyl-beta-neuraminate = a ganglioside GT1aalpha (d18:1(4E)) + CMP + H(+). The catalysed reaction is a ganglioside GT1b (d18:1(4E)) + CMP-N-acetyl-beta-neuraminate = a ganglioside GQ1balpha (d18:1(4E)) + CMP + H(+). It catalyses the reaction 3-O-[alpha-Neu5Ac-(2-&gt;3)-beta-D-Gal-(1-&gt;3)-alpha-D-GalNAc]-L-Ser-[protein] + CMP-N-acetyl-beta-neuraminate = a 3-O-{alpha-Neu5Ac-(2-&gt;3)-beta-D-Gal-(1-&gt;3)-[alpha-Neu5Ac-(2-&gt;6)]-alpha-D-GalNAc}-L-seryl-[protein] + CMP + H(+). The enzyme catalyses 3-O-[alpha-Neu5Ac-(2-&gt;3)-beta-D-Gal-(1-&gt;3)-alpha-D-GalNAc]-L-Thr-[protein] + CMP-N-acetyl-beta-neuraminate = a 3-O-{alpha-Neu5Ac-(2-&gt;3)-beta-D-Gal-(1-&gt;3)-[alpha-Neu5Ac-(2-&gt;6)]-alpha-D-GalNAc}-L-threonyl-[protein] + CMP + H(+). In terms of biological role, transfers the sialyl group (N-acetyl-alpha-neuraminyl or NeuAc) from CMP-NeuAc onto glycoproteins and glycolipids, forming an alpha-2,6-linkage. Produces branched type disialyl structures by transfer of a sialyl group onto the GalNAc or GlcNAc residue inside backbone core chains having a terminal sialic acid with an alpha-2,3-linkage on Gal. ST6GalNAcVI prefers glycolipids to glycoproteins, predominantly catalyzing the biosynthesis of ganglioside GD1alpha from GM1b. Besides GMb1, MSGG and other glycolipids, it shows activity towards sialyl Lc4Cer generating disialyl Lc4Cer, which can lead to the synthesis of disialyl Lewis a (Le(a)), suggested to be a cancer-associated antigen. Also has activity toward GD1a and GT1b, and can generate DSGG (disialylgalactosylgloboside) from MSGG (monosialylgalactosylgloboside). This Homo sapiens (Human) protein is Alpha-N-acetylgalactosaminide alpha-2,6-sialyltransferase 6 (ST6GALNAC6).